The chain runs to 344 residues: Eukaryotic translation initiation factor 2 subunit alpha (344 aa).

The region spanning aspartate 21–arginine 92 is the S1 motif domain. Residue serine 56 is modified to Phosphoserine; by GCN2. A disordered region spans residues leucine 309–glutamate 344. The span at glutamate 314–isoleucine 336 shows a compositional bias: acidic residues. A phosphoserine; by CK2 mark is found at serine 317 and serine 322.

This sequence belongs to the eIF-2-alpha family. Eukaryotic translation initiation factor 2 eIF2 is a heterotrimeric complex composed of an alpha, a beta and a gamma subunit. In terms of processing, phosphorylated at Ser-56 by GCN2. Phosphorylated at Ser-317 and Ser-322 by CK2.

The protein localises to the cytoplasm. It is found in the cytosol. Functions in the early steps of protein synthesis by forming a ternary complex with GTP and initiator tRNA. This complex binds to a 40S ribosomal subunit, followed by mRNA binding to form a 43S pre-initiation complex. Junction of the 60S ribosomal subunit to form the 80S initiation complex is preceded by hydrolysis of the GTP bound to eIF-2 and release of an eIF-2-GDP binary complex. In order for eIF-2 to recycle and catalyze another round of initiation, the GDP bound to eIF-2 must exchange with GTP by way of a reaction catalyzed by eIF2B. This is Eukaryotic translation initiation factor 2 subunit alpha from Arabidopsis thaliana (Mouse-ear cress).